The following is a 1032-amino-acid chain: Suppression of tumorigenicity 18 protein (1032 aa).

Disordered regions lie at residues 29–76 (RAEE…TNDH), 162–213 (GRDK…LTYN), and 325–354 (RQPK…AKCP). The span at 40–51 (NKRKSLLMKPRH) shows a compositional bias: basic residues. Basic and acidic residues predominate over residues 52 to 76 (YSPDMDCKENPDNRNEDDGLETNDH). CCHHC-type zinc fingers lie at residues 344-387 (PRPE…PLEI), 388-431 (LAMH…KLAM), 700-743 (RDLK…LKSL), 744-787 (MAAN…GIKM), 792-835 (EEKE…QKEN), and 845-888 (KLNK…IKKV). The Zn(2+) site is built by C353, C358, H371, C377, C397, C402, H415, C421, C709, C714, H727, C733, C753, C758, H771, C777, C801, C806, H819, C825, C854, C859, H872, and C878. Positions 905–974 (IEGDEEIRHL…KELAGLSQAL (70 aa)) form a coiled coil.

Belongs to the MYT1 family. Detected in brain.

It localises to the nucleus. Repressor that binds to DNA sequences containing a bipartite element consisting of a direct repeat of the sequence 5'-AAAGTTT-3' separated by 2-9 nucleotides. Represses basal transcription activity from target promoters. This chain is Suppression of tumorigenicity 18 protein (St18), found in Rattus norvegicus (Rat).